Reading from the N-terminus, the 97-residue chain is Essential MCU regulator, mitochondrial (97 aa).

A mitochondrion-targeting transit peptide spans 1-35; the sequence is MIVPRLALPISLALQRVSRRVAEHPHNLRILQRHM. A helical transmembrane segment spans residues 53–73; sequence PFGLLAIFCAVIPGLFVGATI.

This sequence belongs to the SMDT1/EMRE family.

Its subcellular location is the mitochondrion inner membrane. Its function is as follows. Essential regulatory subunit of the mitochondrial calcium uniporter MCU channel, a protein that mediates calcium uptake into mitochondria. This Drosophila melanogaster (Fruit fly) protein is Essential MCU regulator, mitochondrial.